A 681-amino-acid polypeptide reads, in one-letter code: Envelope glycoprotein (681 aa).

The N-terminal stretch at 1–18 is a signal peptide; the sequence is MKTTCFLISLILIQGTKN. The Extracellular segment spans residues 19–648; it reads LPILEIASNN…GLGGKWWTSD (630 aa). Cystine bridges form between Cys37/Cys610, Cys92/Cys119, Cys211/Cys226, Cys512/Cys557, and Cys602/Cys609. The receptor-binding stretch occupies residues 38-188; it reads SGTLQKTEDV…FSRQGQGYRH (151 aa). N-linked (GlcNAc...) asparagine; by host glycosylation is found at Asn94, Asn171, Asn190, Asn202, Asn207, Asn219, Asn223, and Asn255. Residues 223-427 form a disordered region; sequence NQTCAPSKIP…PPTPSSTAQH (205 aa). Polar residues-rich tracts occupy residues 244 to 259, 281 to 290, and 308 to 318; these read LTST…TTDP, TSDAVTKQGL, and GGNNTNHSQDA. Positions 277 to 455 are mucin-like region; the sequence is EPHTTSDAVT…PFLDGLINAP (179 aa). N-linked (GlcNAc...) asparagine; by host glycans are attached at residues Asn310, Asn313, Asn325, Asn326, Asn337, Asn344, Asn345, Asn350, Asn360, Asn408, and Asn487. The segment covering 337 to 347 has biased composition (low complexity); it reads NTTTISTNNTS. Polar residues predominate over residues 348–414; it reads KHNFSTLSAP…TAPNTTNEHF (67 aa). The fusion peptide stretch occupies residues 529–549; sequence GLSWIPFFGPGIEGLYTAVLI. Asn564 carries an N-linked (GlcNAc...) asparagine; by host glycan. The N-linked (GlcNAc...) asparagine; by host glycan is linked to Asn619. The helical transmembrane segment at 649 to 669 threads the bilayer; that stretch reads WGVLTNLGILLLLSIAVLIAL. Over 670–681 the chain is Cytoplasmic; the sequence is SCICRIFTKYIG. Residues Cys671 and Cys673 are each lipidated (S-palmitoyl cysteine; by host).

It belongs to the filoviruses glycoprotein family. As to quaternary structure, homotrimer; each monomer consists of a GP1 and a GP2 subunit linked by disulfide bonds. The resulting peplomers (GP1,2) protrude from the virus surface as spikes. GP1,2 interacts with human CD209 and CLEC4M (collectively referred to as DC-SIGN(R)). Asialoglycoprotein receptor (ASGP-R) may be a liver-specific receptor for GP1,2. Members of the Tyro3 receptor tyrosine kinase family may be cell entry factors interacting with GP1,2. Post-translationally, N-glycosylated. In terms of processing, O-glycosylated in the mucin-like region. Specific enzymatic cleavages in vivo yield mature proteins. The precursor is processed into GP1 and GP2 by host cell furin in the trans Golgi, and maybe by other host proteases, to yield the mature GP1 and GP2 proteins. The cleavage site corresponds to the furin optimal cleavage sequence [KR]-X-[KR]-R. Post-translationally, GP1 is phosphorylated on serine residues between residues 260 and 273.

It localises to the virion membrane. Its subcellular location is the host cell membrane. Functionally, GP1 is responsible for binding to the receptor(s) on target cells. Interacts with CD209/DC-SIGN and CLEC4M/DC-SIGNR which act as cofactors for virus entry into the host cell. Binding to CD209 and CLEC4M, which are respectively found on dendritic cells (DCs), and on endothelial cells of liver sinusoids and lymph node sinuses, facilitate infection of macrophages and endothelial cells. These interactions not only facilitate virus cell entry, but also allow capture of viral particles by DCs and subsequent transmission to susceptible cells without DCs infection (trans infection). GP2 acts as a class I viral fusion protein. Under the current model, the protein has at least 3 conformational states: pre-fusion native state, pre-hairpin intermediate state, and post-fusion hairpin state. During viral and target cell membrane fusion, the coiled coil regions (heptad repeats) assume a trimer-of-hairpins structure, positioning the fusion peptide in close proximity to the C-terminal region of the ectodomain. The formation of this structure appears to drive apposition and subsequent fusion of viral and target cell membranes. Responsible for penetration of the virus into the cell cytoplasm by mediating the fusion of the membrane of the endocytosed virus particle with the endosomal membrane. Low pH in endosomes induces an irreversible conformational change in GP2, releasing the fusion hydrophobic peptide. This is Envelope glycoprotein (GP) from Lake Victoria marburgvirus (strain Musoke-80) (MARV).